The chain runs to 400 residues: MKLKTLSVGEVNNYVKKLVENDFILKNLNVKGEISNLKFHSSGHIYFSLKDENSKVNCIMFKNNAVNLDFRLEEGMKVEIKARLGVYHKEGTYQLYCENIKKAGIGELFEEFHKLKKELSEEGIFDEKYKRALPKFPKRIGIITARTGAAVRDIINVIQRRNKSLDIILYPAKVQGENAADSIIEGIRYFNNEKSVDVIILGRGGGSIEELWAFNNRDLAYEIFNSRIPTVSAVGHEVDFTISDFVSDMRAPTPSAAGELVSPSLQEMINDLLNKKEFLHRAVDRRFLNAKRDVDLLHKGLKGNNPTHIIEKRIKEVNTLEEKLNFLGKRKIDKAKDELIALNSILQTLNPLNTLGRGYSVIMDKEDKVINKVSELKKNDMVKVIMKDGSVNIDIKIINE.

Belongs to the XseA family. In terms of assembly, heterooligomer composed of large and small subunits.

It is found in the cytoplasm. The enzyme catalyses Exonucleolytic cleavage in either 5'- to 3'- or 3'- to 5'-direction to yield nucleoside 5'-phosphates.. Bidirectionally degrades single-stranded DNA into large acid-insoluble oligonucleotides, which are then degraded further into small acid-soluble oligonucleotides. The polypeptide is Exodeoxyribonuclease 7 large subunit (Clostridium perfringens (strain 13 / Type A)).